A 212-amino-acid polypeptide reads, in one-letter code: Probable GTP-binding protein EngB (212 aa).

One can recognise an EngB-type G domain in the interval 23-197 (TGIEVAFAGR…ERILDGWFGL (175 aa)). Residues 31 to 38 (GRSNAGKS), 58 to 62 (GRTQL), 76 to 79 (DLPG), 143 to 146 (TKAD), and 176 to 178 (FSS) each bind GTP. Mg(2+) is bound by residues Ser-38 and Thr-60.

The protein belongs to the TRAFAC class TrmE-Era-EngA-EngB-Septin-like GTPase superfamily. EngB GTPase family. Mg(2+) is required as a cofactor.

Its function is as follows. Necessary for normal cell division and for the maintenance of normal septation. The polypeptide is Probable GTP-binding protein EngB (Alteromonas mediterranea (strain DSM 17117 / CIP 110805 / LMG 28347 / Deep ecotype)).